The sequence spans 1761 residues: Lysine-specific demethylase 3B (1761 aa).

Alanine 2 carries the post-translational modification N-acetylalanine. Positions 253 to 346 (DNSAPQSEGG…QRAKQPPSTF (94 aa)) are disordered. The span at 298-309 (ASKKLKGDRGEV) shows a compositional bias: basic and acidic residues. Lysine 361 is modified (N6-acetyllysine). Disordered regions lie at residues 370–394 (QDEPVGGDTPASFTPYSTATGQTPL) and 438–496 (DTGL…NGVL). 3 stretches are compositionally biased toward polar residues: residues 380–392 (ASFTPYSTATGQT), 453–468 (SRSQASGENSRNSILA), and 477–495 (PSSSQPLTFGSGRSQSNGV). Serine 492, serine 546, serine 556, and serine 560 each carry phosphoserine. Residues 572–603 (RSVLGTDTKPGSKAGSSVDRKVPAESMPTLTP) are disordered. Phosphothreonine is present on threonine 614. Residues 714-762 (GPSLSAMGNGRSSSPTSSLTQPIEMPTLSSSPTEERPTVGPGQQDNPLL) form a disordered region. The segment covering 723-745 (GRSSSPTSSLTQPIEMPTLSSSP) has biased composition (polar residues). Phosphoserine occurs at positions 766, 773, 778, and 779. Residue lysine 788 forms a Glycyl lysine isopeptide (Lys-Gly) (interchain with G-Cter in SUMO2) linkage. Serine 798 is subject to Phosphoserine. A disordered region spans residues 805–827 (ACRQDSDSSTNSDLSDLSDSEEQ). The C6-type zinc-finger motif lies at 1031–1056 (CDVCETTLFNIHWVCRKCGFGVCLDC). The span at 1142-1161 (GMSQLPSINPSASSGNETTF) shows a compositional bias: polar residues. Residues 1142–1220 (GMSQLPSINP…PCPDTAPPSS (79 aa)) form a disordered region. The span at 1174–1193 (EPDHVPKADSTDIRSEEPLK) shows a compositional bias: basic and acidic residues. Polar residues predominate over residues 1194-1204 (TDSSASNSNSE). Serine 1253 and serine 1259 each carry phosphoserine. Residues 1293–1297 (LRDLL) carry the LXXLL motif motif. Positions 1498–1721 (MPTRFEDLME…HCFRLTQEFR (224 aa)) constitute a JmjC domain. Residues histidine 1560, aspartate 1562, and histidine 1689 each contribute to the Fe cation site.

Belongs to the JHDM2 histone demethylase family. Fe(2+) serves as cofactor. In terms of tissue distribution, ubiquitous. Highly expressed in placenta, skeletal muscle, kidney, heart and liver.

It localises to the nucleus. The enzyme catalyses N(6),N(6)-dimethyl-L-lysyl(9)-[histone H3] + 2 2-oxoglutarate + 2 O2 = L-lysyl(9)-[histone H3] + 2 formaldehyde + 2 succinate + 2 CO2. Functionally, histone demethylase that specifically demethylates 'Lys-9' of histone H3, thereby playing a central role in histone code. Demethylation of Lys residue generates formaldehyde and succinate. May have tumor suppressor activity. The polypeptide is Lysine-specific demethylase 3B (KDM3B) (Homo sapiens (Human)).